The sequence spans 148 residues: Lipid droplet organization protein LDO16 (148 aa).

The Cytoplasmic portion of the chain corresponds to 1–7 (MVSTATF). A helical transmembrane segment spans residues 8–28 (FFFVYLTLFVVIGFFSSLFII). Position 29 (proline 29) is a topological domain, lumenal. A helical membrane pass occupies residues 30–50 (LLGISFVFAIGVVSFGFCSNM). Over 51-148 (SFKMAQLIYV…NKAGNKFQLS (98 aa)) the chain is Cytoplasmic. A disordered region spans residues 83-110 (QEPQEPLSTLRPVSNPTIPSPLRQTARP). The segment covering 93–109 (RPVSNPTIPSPLRQTAR) has biased composition (polar residues). Serine 102 is modified (phosphoserine).

This sequence belongs to the OSW5 family. Interacts specifically with the seipin complex FLD1-LDB16. Only a fraction appears to associate with the seipin core components, suggesting that it may be an ancillary subunit of the complex. Found to interact with many mitochondrial and peroxisomal proteins.

It localises to the endoplasmic reticulum membrane. Its subcellular location is the lipid droplet. Involved in lipid droplet (LD) organization. Functions primarily upon nutrient depletion, facilitating LD consumption by lipophagy. Required for correct LD distribution during entry into stationary phase, where LDs accumulate at nucleus-vacuole junction (NVJ) contact sites. Involved in membrane interaction in a manner similar to those of SNARE proteins, binding to partners present in mitochondria or peroxisomes. Its partner on the mitochondrion side might be TOM22, a mitochondrial outer membrane protein, linking lipid droplets and mitochondria by protein-protein interaction. Involved in spore wall assembly. The protein is Lipid droplet organization protein LDO16 of Saccharomyces cerevisiae (strain ATCC 204508 / S288c) (Baker's yeast).